Consider the following 511-residue polypeptide: Maturase K (511 aa).

Belongs to the intron maturase 2 family. MatK subfamily.

Its subcellular location is the plastid. The protein resides in the chloroplast. In terms of biological role, usually encoded in the trnK tRNA gene intron. Probably assists in splicing its own and other chloroplast group II introns. The protein is Maturase K of Phleum pratense (Common timothy).